The primary structure comprises 1427 residues: Lysophospholipase NTE1 (1427 aa).

At 1–60 the chain is on the cytoplasmic side; that stretch reads MDSLHVSSTSVLVDVVEAVETATSLVVDTAEAVATEQATPTAVISNALARSAYAAHTSLS. Residues 61–81 form a helical membrane-spanning segment; sequence YLAWAFGLWFLRLIGWVCYGI. Topologically, residues 82–96 are lumenal; sequence PTYVLGLLGRTINIS. Residues 97-117 traverse the membrane as a helical segment; it reads LQFSSLLLILIALVTVVVAVV. Topologically, residues 118 to 1427 are cytoplasmic; sequence RYKYLTVYSR…KRTIARRNSI (1310 aa). The segment covering 281 to 296 has biased composition (polar residues); that stretch reads PMTSASDVPNMSLSSD. Residues 281 to 315 are disordered; sequence PMTSASDVPNMSLSSDGSDDLQKGEPQFGEPRLSE. A nucleoside 3',5'-cyclic phosphate is bound by residues 615-735 and 731-870; these read LMAA…LTKV and SLTK…VASR. Residues 787 to 807 form a disordered region; the sequence is GIVGGESGDAKDGKSHRKNLT. The PNPLA domain maps to 1124–1288; the sequence is LVLGGGGARG…VDNLPVSEMK (165 aa). A GXGXXG motif is present at residues 1128 to 1133; sequence GGGARG. The short motif at 1155-1159 is the GXSXG element; sequence GTSIG. Ser1157 functions as the Nucleophile in the catalytic mechanism. Asp1275 acts as the Proton acceptor in catalysis. The DGA/G signature appears at 1275–1277; sequence DGG.

Belongs to the NTE family.

It is found in the endoplasmic reticulum membrane. It catalyses the reaction a 1-acyl-sn-glycero-3-phosphocholine + H2O = sn-glycerol 3-phosphocholine + a fatty acid + H(+). Its activity is regulated as follows. Inhibited by organophosphorus esters. Functionally, intracellular phospholipase B that catalyzes the double deacylation of phosphatidylcholine (PC) to glycerophosphocholine (GroPCho). Plays an important role in membrane lipid homeostasis. Responsible for the rapid PC turnover in response to inositol, elevated temperatures, or when choline is present in the growth medium. The protein is Lysophospholipase NTE1 (NTE1) of Yarrowia lipolytica (strain CLIB 122 / E 150) (Yeast).